The sequence spans 90 residues: UPF0298 protein RBAM_014860 (90 aa).

This sequence belongs to the UPF0298 family.

It is found in the cytoplasm. The chain is UPF0298 protein RBAM_014860 from Bacillus velezensis (strain DSM 23117 / BGSC 10A6 / LMG 26770 / FZB42) (Bacillus amyloliquefaciens subsp. plantarum).